The primary structure comprises 518 residues: ATP synthase subunit alpha (518 aa).

Position 169–176 (169–176) interacts with ATP; it reads GDRKTGKT.

Belongs to the ATPase alpha/beta chains family. As to quaternary structure, F-type ATPases have 2 components, CF(1) - the catalytic core - and CF(0) - the membrane proton channel. CF(1) has five subunits: alpha(3), beta(3), gamma(1), delta(1), epsilon(1). CF(0) has three main subunits: a(1), b(2) and c(9-12). The alpha and beta chains form an alternating ring which encloses part of the gamma chain. CF(1) is attached to CF(0) by a central stalk formed by the gamma and epsilon chains, while a peripheral stalk is formed by the delta and b chains.

It is found in the cell membrane. The catalysed reaction is ATP + H2O + 4 H(+)(in) = ADP + phosphate + 5 H(+)(out). Functionally, produces ATP from ADP in the presence of a proton gradient across the membrane. The alpha chain is a regulatory subunit. The sequence is that of ATP synthase subunit alpha from Enterococcus faecalis (strain ATCC 700802 / V583).